A 395-amino-acid chain; its full sequence is Extracellular cysteine protease (395 aa).

Positions 1–30 (MKKKLSYMITIMLAFTLSLALGLFFNSAHA) are cleaved as a signal peptide. Positions 31–221 (DSLPQKNGAN…TLEYQSTRNE (191 aa)) are excised as a propeptide. Active-site residues include Cys245, His341, and Asn362.

The protein belongs to the peptidase C47 family. Post-translationally, proteolytically cleaved.

The protein resides in the secreted. The protein localises to the cell wall. Cysteine protease able to cleave elastin, insulin, myoglobin, fibronectin, fibrinogen, HMW-kininogen, alpha-1-protease inhibitor and alpha-1-antitrypsin. Along with other extracellular proteases may contribute to the colonization and infection of human tissues. The protein is Extracellular cysteine protease (ecpA) of Staphylococcus epidermidis (strain ATCC 35984 / DSM 28319 / BCRC 17069 / CCUG 31568 / BM 3577 / RP62A).